A 116-amino-acid polypeptide reads, in one-letter code: Putative superoxide reductase (116 aa).

Residues His20, His46, His52, Cys101, and His104 each coordinate Fe cation.

Belongs to the desulfoferrodoxin family. Fe cation serves as cofactor.

It catalyses the reaction reduced [rubredoxin] + superoxide + 2 H(+) = oxidized [rubredoxin] + H2O2. Its function is as follows. Uses electrons from reduced NADP, by way of rubredoxin and an oxidoreductase, to catalyze the reduction of superoxide to hydrogen peroxide. This chain is Putative superoxide reductase, found in Methanocaldococcus jannaschii (strain ATCC 43067 / DSM 2661 / JAL-1 / JCM 10045 / NBRC 100440) (Methanococcus jannaschii).